A 227-amino-acid chain; its full sequence is MPDIKLLSEGIFEIMKDKRQLATLNLDPGKVVYGEKLISVEGAEYRTWDPRRSKLGAMVLKKFNIPLSKDSKVLYLGAASGTTVSHVSDIASEGAVYSVEFASRSMRDFIRLASRRKNIFPILADAGKPDSYAHIVEPVDLIFQDVAQPNQAEIAARNAARFLNKNGYLLLSIKARSIDTAASPKEIFKEEVKKLEQAFEPGFEILTARDLMPYHEDHLGVLAKLKE.

Residues 82 to 83, 100 to 101, 125 to 126, and 145 to 148 each bind S-adenosyl-L-methionine; these read TT, EF, DA, and DVAQ.

It belongs to the methyltransferase superfamily. Fibrillarin family. Interacts with nop5. Component of box C/D small ribonucleoprotein (sRNP) particles that contain rpl7ae, FlpA and nop5, plus a guide RNA.

In terms of biological role, involved in pre-rRNA and tRNA processing. Utilizes the methyl donor S-adenosyl-L-methionine to catalyze the site-specific 2'-hydroxyl methylation of ribose moieties in rRNA and tRNA. Site specificity is provided by a guide RNA that base pairs with the substrate. Methylation occurs at a characteristic distance from the sequence involved in base pairing with the guide RNA. In Methanosarcina acetivorans (strain ATCC 35395 / DSM 2834 / JCM 12185 / C2A), this protein is Fibrillarin-like rRNA/tRNA 2'-O-methyltransferase.